The sequence spans 361 residues: 5-formaminoimidazole-4-carboxamide-1-(beta)-D-ribofuranosyl 5'-monophosphate synthetase (361 aa).

Residues H27 and S94 each coordinate 5-amino-1-(5-phospho-beta-D-ribosyl)imidazole-4-carboxamide. The 233-residue stretch at 116 to 348 (RAILRWEAER…MGQRIAKEIK (233 aa)) folds into the ATP-grasp domain. ATP-binding positions include 146 to 208 (PDDI…ANYC) and E230. N258 contacts 5-amino-1-(5-phospho-beta-D-ribosyl)imidazole-4-carboxamide. Residues Q297 and E310 each coordinate Mg(2+).

This sequence belongs to the phosphohexose mutase family. Requires Mg(2+) as cofactor. Mn(2+) serves as cofactor.

It carries out the reaction 5-amino-1-(5-phospho-beta-D-ribosyl)imidazole-4-carboxamide + formate + ATP = 5-formamido-1-(5-phospho-D-ribosyl)imidazole-4-carboxamide + ADP + phosphate. The protein operates within purine metabolism; IMP biosynthesis via de novo pathway; 5-formamido-1-(5-phospho-D-ribosyl)imidazole-4-carboxamide from 5-amino-1-(5-phospho-D-ribosyl)imidazole-4-carboxamide (formate route): step 1/1. Its function is as follows. Catalyzes the ATP- and formate-dependent formylation of 5-aminoimidazole-4-carboxamide-1-beta-d-ribofuranosyl 5'-monophosphate (AICAR) to 5-formaminoimidazole-4-carboxamide-1-beta-d-ribofuranosyl 5'-monophosphate (FAICAR) in the absence of folates. The chain is 5-formaminoimidazole-4-carboxamide-1-(beta)-D-ribofuranosyl 5'-monophosphate synthetase from Methanococcus maripaludis (strain C5 / ATCC BAA-1333).